A 267-amino-acid chain; its full sequence is MTKTKIIGILNVTPDSFSDGGKYNSVDKAIARAKEMIDEGVDIIDVGGVSTRPGHTEVSLEEEMERVVPVVEQLVKLDVQISVDTYRSEVAEACLKLGATMINDQWAGLYDPKIFDVVSDYNAEIVLMHNGDGQREQPVVEEMLLSLLTQANKAEMAGIEKGNIWLDPGIGFAKSRSEEKEVMARLDELVATEYPVLLATSRKRFIKEMIGKETTPAERDEATAATTVYGIMKGIQAVRVHNVDLNVKLAQSIDFLKENEHERHHLS.

Residues 1–251 (MTKTKIIGIL…NVDLNVKLAQ (251 aa)) enclose the Pterin-binding domain. Asn11 contacts Mg(2+). Residues Thr51, Asp84, Asn103, Asp167, Lys203, and 239–241 (RVH) each bind (7,8-dihydropterin-6-yl)methyl diphosphate.

The protein belongs to the DHPS family. Mg(2+) is required as a cofactor.

The enzyme catalyses (7,8-dihydropterin-6-yl)methyl diphosphate + 4-aminobenzoate = 7,8-dihydropteroate + diphosphate. The protein operates within cofactor biosynthesis; tetrahydrofolate biosynthesis; 7,8-dihydrofolate from 2-amino-4-hydroxy-6-hydroxymethyl-7,8-dihydropteridine diphosphate and 4-aminobenzoate: step 1/2. In terms of biological role, catalyzes the condensation of para-aminobenzoate (pABA) with 6-hydroxymethyl-7,8-dihydropterin diphosphate (DHPt-PP) to form 7,8-dihydropteroate (H2Pte), the immediate precursor of folate derivatives. This is Dihydropteroate synthase (folP) from Staphylococcus haemolyticus.